Reading from the N-terminus, the 113-residue chain is Large ribosomal subunit protein bL20c (113 aa).

Belongs to the bacterial ribosomal protein bL20 family.

The protein resides in the plastid. It is found in the chloroplast. Functionally, binds directly to 23S ribosomal RNA and is necessary for the in vitro assembly process of the 50S ribosomal subunit. It is not involved in the protein synthesizing functions of that subunit. The sequence is that of Large ribosomal subunit protein bL20c from Nephroselmis olivacea (Green alga).